We begin with the raw amino-acid sequence, 655 residues long: A-type voltage-gated potassium channel KCND3 (655 aa).

At 1–182 (MAAGVAAWLP…FENPHTSTLA (182 aa)) the chain is on the cytoplasmic side. Positions 6 to 21 (AAWLPFARAAAIGWMP) are interaction with KCNIP1 and KCNIP2. An interaction with KCNIP1 region spans residues 70–78 (EKEFFFNED). 4 residues coordinate Zn(2+): His104, Cys110, Cys131, and Cys132. Ser153 bears the Phosphoserine mark. The chain crosses the membrane as a helical span at residues 183–204 (LVFYYVTGFFIAVSVITNVVET). The Extracellular portion of the chain corresponds to 205 to 223 (VPCGTVPGSKELPCGERYS). Residues 224–246 (VAFFCLDTACVMIFTVEYLLRLF) traverse the membrane as a helical segment. Residues 247-253 (AAPSRYR) are Cytoplasmic-facing. A helical membrane pass occupies residues 254–277 (FIRSVMSIIDVVAIMPYYIGLVMT). Residues 278–283 (NNEDVS) lie on the Extracellular side of the membrane. Residues 284–306 (GAFVTLRVFRVFRIFKFSRHSQG) form a helical; Voltage-sensor membrane-spanning segment. The Cytoplasmic portion of the chain corresponds to 307–318 (LRILGYTLKSCA). The chain crosses the membrane as a helical span at residues 319 to 343 (SELGFLLFSLTMAIIIFATVMFYAE). Over 344–352 (KGSSASKFT) the chain is Extracellular. The segment at residues 353-366 (SIPASFWYTIVTMT) is an intramembrane region (helical). Residues Thr367, Leu368, Gly369, and Tyr370 each contribute to the K(+) site. The Selectivity filter signature appears at 367–372 (TLGYGD). An intramembrane segment occupies 367-374 (TLGYGDMV). A helical transmembrane segment spans residues 378-400 (IAGKIFGSICSLSGVLVIALPVP). Residues 401–655 (VIVSNFSRIY…TSNVVKVSAL (255 aa)) are Cytoplasmic-facing. Phosphothreonine is present on Thr459. The tract at residues 470 to 487 (SLIESQHHHLLHCLEKTT) is interaction with KCNIP1 and KCNIP2. Residues 472 to 487 (IESQHHHLLHCLEKTT) form a mediates dendritic targeting region. The disordered stretch occupies residues 523-565 (SSMQNYPSTRSPSLSSHSGLTTTCCSRRSKKTTHLPNSNLPAT). A compositionally biased stretch (low complexity) spans 529 to 548 (PSTRSPSLSSHSGLTTTCCS). Residues Ser569 and Ser585 each carry the phosphoserine modification. The segment at 615-655 (ISIPTPPALTPEGESRPPPASPGPNTNIPSITSNVVKVSAL) is disordered. Positions 637–655 (GPNTNIPSITSNVVKVSAL) are enriched in polar residues.

The protein belongs to the potassium channel family. D (Shal) (TC 1.A.1.2) subfamily. Kv4.3/KCND3 sub-subfamily. In terms of assembly, homotetramer. Heterotetramer with KCND2. Associates with the regulatory subunit KCNIP3. Associates with the regulatory subunit KCNIP4. Interacts with KCNE1, KCNE2, SCN1B and KCNAB1 and DLG1. Component of heteromultimeric potassium channels. Identified in potassium channel complexes containing KCND1, KCND2, KCND3, KCNIP1, KCNIP2, KCNIP3, KCNIP4, DPP6 and DPP10. Interacts with KCNIP1; each KCNIP1 monomer interacts with two adjacent KCND3 subunits, through both the N-terminal inactivation ball of a KCND3 subunit and a C-terminal helix from the adjacent KCND3 subunit, clamping them together; this interaction stabilizes the tetrameric form and modulates the channel gating kinetics namely channel activation and inactivation kinetics and rate of recovery from inactivation. Interacts with DPP6; this interaction modulates the channel gating kinetics namely channel activation and inactivation kinetics and rate of recovery from inactivation. Interacts with KCNIP2; each KCNIP2 monomer interacts with two adjacent KCND3 subunits, through both the N-terminal inactivation ball of a KCND3 subunit and a C-terminal helix from the adjacent KCND3 subunit, clamping them together; this interaction modulates the channel gating kinetics. Regulated through phosphorylation at Ser-569 by CaMK2D.

Its subcellular location is the cell membrane. It is found in the sarcolemma. It localises to the cell projection. The protein resides in the dendrite. It carries out the reaction K(+)(in) = K(+)(out). Its function is as follows. Pore-forming (alpha) subunit of voltage-gated A-type potassium channels that mediates transmembrane potassium transport in excitable membranes, in brain and heart. In cardiomyocytes, may generate the transient outward potassium current I(To). In neurons, may conduct the transient subthreshold somatodendritic A-type potassium current (ISA). Kinetics properties are characterized by fast activation at subthreshold membrane potentials, rapid inactivation, and quick recovery from inactivation. Channel properties are modulated by interactions with regulatory subunits. Interaction with the regulatory subunits KCNIP1 or KCNIP2 modulates the channel gating kinetics namely channel activation and inactivation kinetics and rate of recovery from inactivation. Likewise, interaction with DPP6 modulates the channel gating kinetics namely channel activation and inactivation kinetics. The chain is A-type voltage-gated potassium channel KCND3 from Mus musculus (Mouse).